The primary structure comprises 134 residues: uncharacterized protein (134 aa).

A signal peptide spans 1-23 (MWHLRCSNWRGSGVFGMCFSLSG). Cys24 carries N-palmitoyl cysteine lipidation. Cys24 is lipidated: S-diacylglycerol cysteine.

Its subcellular location is the cell membrane. This is an uncharacterized protein from Treponema pallidum (strain Nichols).